The primary structure comprises 82 residues: ATP synthase subunit c (82 aa).

Transmembrane regions (helical) follow at residues 5–25 (MSLV…FGAI) and 55–75 (FLII…VIAF).

It belongs to the ATPase C chain family. F-type ATPases have 2 components, F(1) - the catalytic core - and F(0) - the membrane proton channel. F(1) has five subunits: alpha(3), beta(3), gamma(1), delta(1), epsilon(1). F(0) has three main subunits: a(1), b(2) and c(10-14). The alpha and beta chains form an alternating ring which encloses part of the gamma chain. F(1) is attached to F(0) by a central stalk formed by the gamma and epsilon chains, while a peripheral stalk is formed by the delta and b chains.

Its subcellular location is the cell membrane. Functionally, f(1)F(0) ATP synthase produces ATP from ADP in the presence of a proton or sodium gradient. F-type ATPases consist of two structural domains, F(1) containing the extramembraneous catalytic core and F(0) containing the membrane proton channel, linked together by a central stalk and a peripheral stalk. During catalysis, ATP synthesis in the catalytic domain of F(1) is coupled via a rotary mechanism of the central stalk subunits to proton translocation. In terms of biological role, key component of the F(0) channel; it plays a direct role in translocation across the membrane. A homomeric c-ring of between 10-14 subunits forms the central stalk rotor element with the F(1) delta and epsilon subunits. This chain is ATP synthase subunit c, found in Carboxydothermus hydrogenoformans (strain ATCC BAA-161 / DSM 6008 / Z-2901).